The primary structure comprises 133 residues: Thioredoxin H2 (133 aa).

The interval 1–22 is disordered; that stretch reads MGGALSTVFGSGEDATAAGTES. The region spanning 6–133 is the Thioredoxin domain; it reads STVFGSGEDA…LEKKVSKLRA (128 aa). Active-site nucleophile residues include cysteine 59 and cysteine 62. Residues cysteine 59 and cysteine 62 are joined by a disulfide bond.

The protein belongs to the thioredoxin family. Plant H-type subfamily. As to quaternary structure, interacts with MDH1.

The protein resides in the cytoplasm. The protein localises to the mitochondrion. Its function is as follows. Thiol-disulfide oxidoreductase probably involved in the redox regulation of a number of cytosolic enzymes. Possesses insulin disulfide bonds reducing activity. The sequence is that of Thioredoxin H2 (TRX2) from Arabidopsis thaliana (Mouse-ear cress).